The sequence spans 247 residues: Large ribosomal subunit protein uL30 (247 aa).

The protein belongs to the universal ribosomal protein uL30 family.

This chain is Large ribosomal subunit protein uL30 (RPL7L1), found in Sus scrofa (Pig).